The chain runs to 710 residues: E3 ubiquitin-protein ligase TRIM9 (710 aa).

The segment at 10-50 adopts an RING-type zinc-finger fold; it reads CPVCGSFYREPIILPCSHNLCQACARNILVQTPESESPQSR. Thr-41 carries the post-translational modification Phosphothreonine. A phosphoserine mark is found at Ser-44, Ser-46, Ser-49, and Ser-53. 2 consecutive B box-type zinc fingers follow at residues 163-212 and 224-266; these read AAAL…LVPP and RKVS…VKAL. Cys-168, Cys-171, Cys-193, His-198, Cys-229, His-232, Cys-252, and His-258 together coordinate Zn(2+). Positions 273 to 340 form a coiled coil; sequence HKSQLSQALN…KAQLLARVNK (68 aa). One can recognise a COS domain in the interval 374-432; sequence IKENDPSGFLQISDALIRRVHLTEDQWGKGTLTPRMTTDFDLSLDNSPLLQSIHQLDFV. One can recognise a Fibronectin type-III domain in the interval 440–535; it reads VPATPILQLE…KTLVLQTSEV (96 aa). In terms of domain architecture, B30.2/SPRY spans 533 to 702; sequence SEVAWFAFDP…LHTGLPVPDF (170 aa).

As to quaternary structure, interacts with SNAP25. Auto-ubiquitinated. As to expression, brain (at protein level). Expressed in fetal and adult brain.

It is found in the cytoplasmic vesicle. It localises to the secretory vesicle. The protein localises to the synaptic vesicle. Its subcellular location is the synapse. The protein resides in the cytoplasm. It is found in the cytoskeleton. It localises to the cell projection. The protein localises to the dendrite. It catalyses the reaction S-ubiquitinyl-[E2 ubiquitin-conjugating enzyme]-L-cysteine + [acceptor protein]-L-lysine = [E2 ubiquitin-conjugating enzyme]-L-cysteine + N(6)-ubiquitinyl-[acceptor protein]-L-lysine.. It functions in the pathway protein modification; protein ubiquitination. Functionally, E3 ubiquitin-protein ligase which ubiquitinates itself in cooperation with an E2 enzyme UBE2D2/UBC4 and serves as a targeting signal for proteasomal degradation. May play a role in regulation of neuronal functions. May act as a regulator of synaptic vesicle exocytosis by controlling the availability of SNAP25 for the SNARE complex formation. The sequence is that of E3 ubiquitin-protein ligase TRIM9 (Trim9) from Rattus norvegicus (Rat).